A 310-amino-acid chain; its full sequence is uncharacterized protein (310 aa).

A run of 9 helical transmembrane segments spans residues 1-21, 38-58, 74-94, 110-130, 135-155, 194-214, 228-248, 256-276, and 284-304; these read MIYF…MFSK, FFFY…VVYT, TSYF…FFIF, YGLW…SFLF, WILY…IFFS, IFIT…IVFS, LFII…MYLF, FPIM…KILI, and IFLT…INLI.

This sequence belongs to the TerC family.

It is found in the cell membrane. This is an uncharacterized protein from Buchnera aphidicola subsp. Schizaphis graminum (strain Sg).